Here is a 328-residue protein sequence, read N- to C-terminus: Cytochrome c biogenesis protein CcsA (328 aa).

Transmembrane regions (helical) follow at residues 12-32 (HISF…LLLG), 45-65 (GMII…IFSG), 72-92 (LYES…VLCL), 100-120 (FNTI…SGLL), 145-165 (MILG…ILVI), 234-254 (TISL…VWAN), 263-283 (WDPK…YLHI), and 296-316 (IVAS…NLLG).

It belongs to the CcmF/CycK/Ccl1/NrfE/CcsA family. May interact with Ccs1.

It localises to the plastid. The protein localises to the chloroplast thylakoid membrane. In terms of biological role, required during biogenesis of c-type cytochromes (cytochrome c6 and cytochrome f) at the step of heme attachment. This chain is Cytochrome c biogenesis protein CcsA, found in Phaseolus vulgaris (Kidney bean).